Consider the following 1224-residue polypeptide: WD repeat-containing protein 11 (1224 aa).

WD repeat units lie at residues lysine 59–glutamate 108 and glutamate 111–lysine 154. Phosphoserine is present on residues serine 205 and serine 209. The stretch at lysine 354–asparagine 393 is one WD 3 repeat. Serine 402 and serine 406 each carry phosphoserine. 6 WD repeats span residues arginine 471 to glutamate 510, asparagine 566 to glutamate 605, glycine 708 to isoleucine 745, threonine 747 to serine 787, asparagine 793 to arginine 831, and serine 893 to serine 940.

As to quaternary structure, component of the complex WDR11 composed of C17orf75, FAM91A1 and WDR11; FAM91A1 and WDR11 are required for proper location of the complex. Interacts (via the N-terminal and the central portion of the protein) with EMX1. Interacts with GLI3; the interaction associateS EMX1 with GLI3. Interacts with TBC1D23; this interaction may be indirect and recruits TBC1D23 to AP-1-derived vesicles. Ubiquitous.

The protein localises to the cytoplasm. It is found in the cytoskeleton. Its subcellular location is the cilium basal body. The protein resides in the nucleus. It localises to the cilium axoneme. The protein localises to the cytoplasmic vesicle. It is found in the golgi apparatus. Its subcellular location is the trans-Golgi network. Its function is as follows. Involved in the Hedgehog (Hh) signaling pathway, is essential for normal ciliogenesis. Regulates the proteolytic processing of GLI3 and cooperates with the transcription factor EMX1 in the induction of downstream Hh pathway gene expression and gonadotropin-releasing hormone production. WDR11 complex facilitates the tethering of Adaptor protein-1 complex (AP-1)-derived vesicles. WDR11 complex acts together with TBC1D23 to facilitate the golgin-mediated capture of vesicles generated using AP-1. This Homo sapiens (Human) protein is WD repeat-containing protein 11 (WDR11).